A 110-amino-acid chain; its full sequence is PCNA-associated factor (110 aa).

K15 is covalently cross-linked (Glycyl lysine isopeptide (Lys-Gly) (interchain with G-Cter in ubiquitin)). The D-box signature appears at 23–34 (RKVLGSSTFVTN). K24 is subject to N6-acetyllysine; alternate. K24 is covalently cross-linked (Glycyl lysine isopeptide (Lys-Gly) (interchain with G-Cter in ubiquitin); alternate). 2 positions are modified to phosphoserine: S28 and S71. Low complexity predominate over residues 28–39 (SSTFVTNSSSSS). Residues 28-110 (SSTFVTNSSS…QPDHRDDENE (83 aa)) form a disordered region. The short motif at 61–71 (QKGIGEFFRLS) is the PIP-box element. Positions 71–80 (SPKESKKENQ) are enriched in basic and acidic residues. A KEN box motif is present at residues 77-79 (KEN). The short motif at 84 to 96 (EAGTSGLGKAKRK) is the Initiation motif element.

In terms of assembly, interacts (when monoubiquitinated at Lys-15 and Lys-24) with PCNA. Interacts with isoform 2/p33ING1b of ING1. Interacts with BRCA1. Monoubiquitinated at Lys-15 and Lys-24 during normal S phase, promoting its association with PCNA. Also diubiquitinated at these 2 sites. Following DNA damage, monoubiquitin chains at Lys-15 and Lys-24 are probably extended, leading to disrupt the interaction with PCNA. Polyubiquitinated by the APC/C complex at the mitotic exit, leading to its degradation by the proteasome.

It localises to the nucleus. The protein resides in the cytoplasm. The protein localises to the perinuclear region. PCNA-binding protein that acts as a regulator of DNA repair during DNA replication. Following DNA damage, the interaction with PCNA is disrupted, facilitating the interaction between monoubiquitinated PCNA and the translesion DNA synthesis DNA polymerase eta (POLH) at stalled replisomes, facilitating the bypass of replication-fork-blocking lesions. Also acts as a regulator of centrosome number. The protein is PCNA-associated factor of Mus musculus (Mouse).